Reading from the N-terminus, the 669-residue chain is Zeaxanthin epoxidase, chloroplastic (669 aa).

Residues 1 to 49 (MYSTVFYTSVHPSTSVLSRKQLPLLISKDFSAELYHSLPCRSLENGHIN) constitute a chloroplast transit peptide. Residues 87 to 115 (KVLV…LVFE) and 365 to 378 (TFSW…LLGD) contribute to the FAD site. Residues 553-617 (IVLSRDEDVP…HGTWVTDNEG (65 aa)) form the FHA domain.

It depends on FAD as a cofactor.

The protein localises to the plastid. It is found in the chloroplast. The enzyme catalyses all-trans-zeaxanthin + 4 reduced [2Fe-2S]-[ferredoxin] + 2 O2 + 4 H(+) = all-trans-violaxanthin + 4 oxidized [2Fe-2S]-[ferredoxin] + 2 H2O. The protein operates within plant hormone biosynthesis; abscisate biosynthesis. In terms of biological role, converts zeaxanthin into antheraxanthin and subsequently violaxanthin. Involved in the epoxidation of zeaxanthin. Plays an important role in resistance to stresses, seed development and dormancy. The protein is Zeaxanthin epoxidase, chloroplastic of Solanum lycopersicum (Tomato).